The chain runs to 106 residues: Small ribosomal subunit protein uS10 (106 aa).

The protein belongs to the universal ribosomal protein uS10 family. As to quaternary structure, part of the 30S ribosomal subunit.

Involved in the binding of tRNA to the ribosomes. This is Small ribosomal subunit protein uS10 from Pyrobaculum calidifontis (strain DSM 21063 / JCM 11548 / VA1).